A 2193-amino-acid chain; its full sequence is Genome polyprotein (2193 aa).

The N-myristoyl glycine; by host moiety is linked to residue G2. The Cytoplasmic segment spans residues 2 to 1503; it reads GAQVSTQKTG…HVSRAFICLQ (1502 aa). The amphipathic alpha-helix stretch occupies residues 565–582; the sequence is QLLQGDVEEAVNRAVARV. Catalysis depends on for protease 2A activity residues H880 and D898. Zn(2+)-binding residues include C915 and C917. The active-site For protease 2A activity is the C969. Residues C975 and H977 each coordinate Zn(2+). Residues 1109–1181 are membrane-binding; that stretch reads SNGWLKKFTE…EQSAPSQSDQ (73 aa). The oligomerization stretch occupies residues 1109 to 1247; sequence SNGWLKKFTE…SPGAGKSVAT (139 aa). The tract at residues 1130 to 1134 is RNA-binding; that stretch reads AIKIQ. An SF3 helicase domain is found at 1213 to 1369; the sequence is EKKMSNYIQF…SMYSQNGKIN (157 aa). C1377, C1389, and C1394 together coordinate Zn(2+). A C4-type; degenerate zinc finger spans residues 1377–1394; sequence CDEECCPVNFKRCCPLVC. The interval 1421–1428 is RNA-binding; it reads EYNHRHSV. The segment at 1432–1437 is oligomerization; it reads LEALFQ. Residues 1504-1519 lie within the membrane without spanning it; that stretch reads ALTTFVSVAGIIYIIY. The Cytoplasmic portion of the chain corresponds to 1520–2193; the sequence is KLFAGFQGAY…TLRRKWLDSF (674 aa). O-(5'-phospho-RNA)-tyrosine is present on Y1529. In terms of domain architecture, Peptidase C3 spans 1549–1727; sequence GPAFEFAVAM…FSAALLRHYF (179 aa). Residues H1588, E1619, and C1695 each act as for protease 3C activity in the active site. The RdRp catalytic domain maps to 1958 to 2074; the sequence is GHLIAFDYSG…SYPWPIDASL (117 aa). 2 residues coordinate Mg(2+): D1964 and D2060.

It belongs to the picornaviruses polyprotein family. In terms of assembly, interacts with capsid protein VP1 and capsid protein VP3 to form heterotrimeric protomers. As to quaternary structure, interacts with capsid protein VP0, and capsid protein VP3 to form heterotrimeric protomers. Five protomers subsequently associate to form pentamers which serve as building blocks for the capsid. Interacts with capsid protein VP2, capsid protein VP3 and capsid protein VP4 following cleavage of capsid protein VP0. Interacts with capsid protein VP1 and capsid protein VP3 in the mature capsid. Interacts with host CD55; this interaction promotes virus attachment to the host cell and subsequent internalization. In terms of assembly, interacts with capsid protein VP0 and capsid protein VP1 to form heterotrimeric protomers. Five protomers subsequently associate to form pentamers which serve as building blocks for the capsid. Interacts with capsid protein VP4 in the mature capsid. Interacts with protein 2C; this interaction may be important for virion morphogenesis. Interacts with host CD55; this interaction promotes virus attachment to the host cell and subsequent internalization. As to quaternary structure, interacts with capsid protein VP1 and capsid protein VP3. Homodimer. In terms of assembly, homohexamer; forms a hexameric ring structure with 6-fold symmetry characteristic of AAA+ ATPases. Interacts (via N-terminus) with host RTN3 (via reticulon domain); this interaction is important for viral replication. Interacts with capsid protein VP3; this interaction may be important for virion morphogenesis. As to quaternary structure, interacts with protein 3CD. Homodimer. Interacts with host GBF1. Interacts (via GOLD domain) with host ACBD3 (via GOLD domain); this interaction allows the formation of a viral protein 3A/ACBD3 heterotetramer with a 2:2 stoichiometry, which will stimulate the recruitment of host PI4KB in order to synthesize PI4P at the viral RNA replication sites. In terms of assembly, interacts with RNA-directed RNA polymerase. As to quaternary structure, interacts with protein 3AB and with RNA-directed RNA polymerase. Interacts with Viral protein genome-linked and with protein 3CD. Mg(2+) serves as cofactor. Specific enzymatic cleavages in vivo by the viral proteases yield processing intermediates and the mature proteins. Post-translationally, myristoylation is required for the formation of pentamers during virus assembly. Further assembly of 12 pentamers and a molecule of genomic RNA generates the provirion. In terms of processing, during virion maturation, immature virions are rendered infectious following cleavage of VP0 into VP4 and VP2. This maturation seems to be an autocatalytic event triggered by the presence of RNA in the capsid and it is followed by a conformational change infectious virion. Myristoylation is required during RNA encapsidation and formation of the mature virus particle. Post-translationally, VPg is uridylylated by the polymerase into VPg-pUpU. This acts as a nucleotide-peptide primer for the genomic RNA replication.

Its subcellular location is the virion. It localises to the host cytoplasm. It is found in the host cytoplasmic vesicle membrane. The protein resides in the host nucleus. It carries out the reaction a ribonucleoside 5'-triphosphate + H2O = a ribonucleoside 5'-diphosphate + phosphate + H(+). The catalysed reaction is Selective cleavage of Tyr-|-Gly bond in the picornavirus polyprotein.. The enzyme catalyses RNA(n) + a ribonucleoside 5'-triphosphate = RNA(n+1) + diphosphate. It catalyses the reaction Selective cleavage of Gln-|-Gly bond in the poliovirus polyprotein. In other picornavirus reactions Glu may be substituted for Gln, and Ser or Thr for Gly.. Its activity is regulated as follows. Replication or transcription is subject to high level of random mutations by the nucleotide analog ribavirin. Its function is as follows. Forms an icosahedral capsid of pseudo T=3 symmetry with capsid proteins VP2 and VP3. The capsid is 300 Angstroms in diameter, composed of 60 copies of each capsid protein and enclosing the viral positive strand RNA genome. Capsid protein VP1 mainly forms the vertices of the capsid. Capsid protein VP1 interacts with host cell receptor to provide virion attachment to target host cells. This attachment induces virion internalization. Tyrosine kinases are probably involved in the entry process. After binding to its receptor, the capsid undergoes conformational changes. Capsid protein VP1 N-terminus (that contains an amphipathic alpha-helix) and capsid protein VP4 are externalized. Together, they shape a pore in the host membrane through which viral genome is translocated to host cell cytoplasm. Functionally, forms an icosahedral capsid of pseudo T=3 symmetry with capsid proteins VP2 and VP3. The capsid is 300 Angstroms in diameter, composed of 60 copies of each capsid protein and enclosing the viral positive strand RNA genome. Lies on the inner surface of the capsid shell. After binding to the host receptor, the capsid undergoes conformational changes. Capsid protein VP4 is released, Capsid protein VP1 N-terminus is externalized, and together, they shape a pore in the host membrane through which the viral genome is translocated into the host cell cytoplasm. In terms of biological role, component of immature procapsids, which is cleaved into capsid proteins VP4 and VP2 after maturation. Allows the capsid to remain inactive before the maturation step. Its function is as follows. Cysteine protease that cleaves viral polyprotein and specific host proteins. It is responsible for the autocatalytic cleavage between the P1 and P2 regions, which is the first cleavage occurring in the polyprotein. Also cleaves the host translation initiation factor EIF4G1, in order to shut down the capped cellular mRNA translation. Inhibits the host nucleus-cytoplasm protein and RNA trafficking by cleaving host members of the nuclear pores. Counteracts stress granule formation probably by antagonizing its assembly or promoting its dissassembly. Functionally, plays an essential role in the virus replication cycle by acting as a viroporin. Creates a pore in the host endoplasmic reticulum and as a consequence releases Ca2+ in the cytoplasm of infected cell. In turn, high levels of cytoplasmic calcium may trigger membrane trafficking and transport of viral ER-associated proteins to viroplasms, sites of viral genome replication. Induces and associates with structural rearrangements of intracellular membranes. Displays RNA-binding, nucleotide binding and NTPase activities. May play a role in virion morphogenesis and viral RNA encapsidation by interacting with the capsid protein VP3. In terms of biological role, localizes the viral replication complex to the surface of membranous vesicles. Together with protein 3CD binds the Cis-Active RNA Element (CRE) which is involved in RNA synthesis initiation. Acts as a cofactor to stimulate the activity of 3D polymerase, maybe through a nucleid acid chaperone activity. Its function is as follows. Localizes the viral replication complex to the surface of membranous vesicles. It inhibits host cell endoplasmic reticulum-to-Golgi apparatus transport and causes the disassembly of the Golgi complex, possibly through GBF1 interaction. This would result in depletion of MHC, trail receptors and IFN receptors at the host cell surface. Plays an essential role in viral RNA replication by recruiting ACBD3 and PI4KB at the viral replication sites, thereby allowing the formation of the rearranged membranous structures where viral replication takes place. Functionally, acts as a primer for viral RNA replication and remains covalently bound to viral genomic RNA. VPg is uridylylated prior to priming replication into VPg-pUpU. The oriI viral genomic sequence may act as a template for this. The VPg-pUpU is then used as primer on the genomic RNA poly(A) by the RNA-dependent RNA polymerase to replicate the viral genome. During genome replication, the VPg-RNA linkage is removed by the host TDP2, thereby accelerating replication. During the late stage of the replication cycle, host TDP2 is excluded from sites of viral RNA synthesis and encapsidation, allowing for the generation of progeny virions. Involved in the viral replication complex and viral polypeptide maturation. It exhibits protease activity with a specificity and catalytic efficiency that is different from protease 3C. Protein 3CD lacks polymerase activity. Protein 3CD binds to the 5'UTR of the viral genome. In terms of biological role, replicates the viral genomic RNA on the surface of intracellular membranes. May form linear arrays of subunits that propagate along a strong head-to-tail interaction called interface-I. Covalently attaches UMP to a tyrosine of VPg, which is used to prime RNA synthesis. The positive stranded RNA genome is first replicated at virus induced membranous vesicles, creating a dsRNA genomic replication form. This dsRNA is then used as template to synthesize positive stranded RNA genomes. ss(+)RNA genomes are either translated, replicated or encapsidated. Its function is as follows. Major viral protease that mediates proteolytic processing of the polyprotein. Cleaves host EIF5B, contributing to host translation shutoff. Also cleaves host PABPC1, contributing to host translation shutoff. Cleaves host NLRP1, triggers host N-glycine-mediated degradation of the autoinhibitory NLRP1 N-terminal fragment. In Echovirus 12 (strain Travis), this protein is Genome polyprotein.